Reading from the N-terminus, the 599-residue chain is NADH-quinone oxidoreductase subunit C/D (599 aa).

An NADH dehydrogenase I subunit C region spans residues 1–189 (MTDLTTHDLA…DPFVLTKQKE (189 aa)). The tract at residues 213–599 (DFMFLNLGPN…IDFVMSDVDR (387 aa)) is NADH dehydrogenase I subunit D.

It in the N-terminal section; belongs to the complex I 30 kDa subunit family. This sequence in the C-terminal section; belongs to the complex I 49 kDa subunit family. NDH-1 is composed of 13 different subunits. Subunits NuoB, CD, E, F, and G constitute the peripheral sector of the complex.

It is found in the cell inner membrane. The catalysed reaction is a quinone + NADH + 5 H(+)(in) = a quinol + NAD(+) + 4 H(+)(out). In terms of biological role, NDH-1 shuttles electrons from NADH, via FMN and iron-sulfur (Fe-S) centers, to quinones in the respiratory chain. The immediate electron acceptor for the enzyme in this species is believed to be ubiquinone. Couples the redox reaction to proton translocation (for every two electrons transferred, four hydrogen ions are translocated across the cytoplasmic membrane), and thus conserves the redox energy in a proton gradient. The polypeptide is NADH-quinone oxidoreductase subunit C/D (Pectobacterium carotovorum subsp. carotovorum (strain PC1)).